We begin with the raw amino-acid sequence, 144 residues long: Transcription antitermination protein NusB (144 aa).

This sequence belongs to the NusB family.

Involved in transcription antitermination. Required for transcription of ribosomal RNA (rRNA) genes. Binds specifically to the boxA antiterminator sequence of the ribosomal RNA (rrn) operons. In Dictyoglomus thermophilum (strain ATCC 35947 / DSM 3960 / H-6-12), this protein is Transcription antitermination protein NusB.